A 382-amino-acid chain; its full sequence is Lipid-A-disaccharide synthase (382 aa).

It belongs to the LpxB family.

It carries out the reaction a lipid X + a UDP-2-N,3-O-bis[(3R)-3-hydroxyacyl]-alpha-D-glucosamine = a lipid A disaccharide + UDP + H(+). The protein operates within bacterial outer membrane biogenesis; LPS lipid A biosynthesis. Its function is as follows. Condensation of UDP-2,3-diacylglucosamine and 2,3-diacylglucosamine-1-phosphate to form lipid A disaccharide, a precursor of lipid A, a phosphorylated glycolipid that anchors the lipopolysaccharide to the outer membrane of the cell. The sequence is that of Lipid-A-disaccharide synthase from Dechloromonas aromatica (strain RCB).